Consider the following 551-residue polypeptide: Glucans biosynthesis protein D (551 aa).

The segment at residues 1 to 32 is a signal peptide (tat-type signal); the sequence is MNRRRFIKGSMAMAAVCGSSGIASLFSQAAFA.

The protein belongs to the OpgD/OpgG family. Post-translationally, predicted to be exported by the Tat system. The position of the signal peptide cleavage has not been experimentally proven.

Its subcellular location is the periplasm. Its pathway is glycan metabolism; osmoregulated periplasmic glucan (OPG) biosynthesis. Functionally, probably involved in the control of the structural glucose backbone of osmoregulated periplasmic glucans (OPGs). The protein is Glucans biosynthesis protein D (mdoD) of Salmonella typhimurium (strain LT2 / SGSC1412 / ATCC 700720).